Reading from the N-terminus, the 526-residue chain is Peptide chain release factor 3 (526 aa).

Residues 9–277 (ERRRTFAIIS…AFAEYAPPPQ (269 aa)) enclose the tr-type G domain. Residues 18-25 (SHPDAGKT), 86-90 (DTPGH), and 140-143 (NKLD) contribute to the GTP site.

The protein belongs to the TRAFAC class translation factor GTPase superfamily. Classic translation factor GTPase family. PrfC subfamily.

Its subcellular location is the cytoplasm. Increases the formation of ribosomal termination complexes and stimulates activities of RF-1 and RF-2. It binds guanine nucleotides and has strong preference for UGA stop codons. It may interact directly with the ribosome. The stimulation of RF-1 and RF-2 is significantly reduced by GTP and GDP, but not by GMP. The sequence is that of Peptide chain release factor 3 from Methylococcus capsulatus (strain ATCC 33009 / NCIMB 11132 / Bath).